A 906-amino-acid chain; its full sequence is Protein translocase subunit SecA (906 aa).

ATP-binding positions include Gln86, 104–108 (GEGKT), and Asp511. Composition is skewed to basic and acidic residues over residues 853-865 (HESVIDNNQRHDE) and 877-888 (VRREGPKVKRND). The disordered stretch occupies residues 853-906 (HESVIDNNQRHDEDEQEEAPKVQQVRREGPKVKRNDPCPCGSGKKYKQCHSKVE). 4 residues coordinate Zn(2+): Cys890, Cys892, Cys901, and His902. Basic residues predominate over residues 896 to 906 (KKYKQCHSKVE).

Belongs to the SecA family. In terms of assembly, monomer and homodimer. Part of the essential Sec protein translocation apparatus which comprises SecA, SecYEG and auxiliary proteins SecDF-YajC and YidC. It depends on Zn(2+) as a cofactor.

It localises to the cell inner membrane. It is found in the cytoplasm. It carries out the reaction ATP + H2O + cellular proteinSide 1 = ADP + phosphate + cellular proteinSide 2.. Its function is as follows. Part of the Sec protein translocase complex. Interacts with the SecYEG preprotein conducting channel. Has a central role in coupling the hydrolysis of ATP to the transfer of proteins into and across the cell membrane, serving both as a receptor for the preprotein-SecB complex and as an ATP-driven molecular motor driving the stepwise translocation of polypeptide chains across the membrane. This Francisella tularensis subsp. mediasiatica (strain FSC147) protein is Protein translocase subunit SecA.